Reading from the N-terminus, the 226-residue chain is Thymocyte nuclear protein 1 (226 aa).

Residues 1-38 (MPRPRKRQTGTAGPDRKKLSGKRTKTENSESTSVKLEN) are disordered. Residues 5–10 (RKRQTG) carry the Nuclear localization signal motif. Residues 14-28 (PDRKKLSGKRTKTEN) are compositionally biased toward basic and acidic residues. Over residues 29–38 (SESTSVKLEN) the composition is skewed to polar residues.

In terms of processing, phosphorylated. Expressed in the medulla containing mature thymocytes, but not the cortex having immature thymocytes (at protein level). Abundant expression seen in testis, liver, brain and kidney with lower levels of the expression in thymus, spleen, heart and stomach.

It localises to the nucleus. Functionally, specifically binds 5-hydroxymethylcytosine (5hmC), suggesting that it acts as a specific reader of 5hmC. This is Thymocyte nuclear protein 1 (Thyn1) from Mus musculus (Mouse).